Consider the following 579-residue polypeptide: Aspartate--tRNA(Asp/Asn) ligase (579 aa).

Glutamate 169 lines the L-aspartate pocket. The aspartate stretch occupies residues 193 to 196 (QLFK). Arginine 215 contacts L-aspartate. ATP is bound by residues 215-217 (RDE) and glutamine 224. Histidine 437 lines the L-aspartate pocket. Glutamate 471 contacts ATP. Arginine 478 contacts L-aspartate. 523–526 (GWDR) contacts ATP. Residues 551–579 (DPLTGAPTPITAEQRREAGVDAVPEQATS) are disordered.

The protein belongs to the class-II aminoacyl-tRNA synthetase family. Type 1 subfamily. In terms of assembly, homodimer.

Its subcellular location is the cytoplasm. It catalyses the reaction tRNA(Asx) + L-aspartate + ATP = L-aspartyl-tRNA(Asx) + AMP + diphosphate. Aspartyl-tRNA synthetase with relaxed tRNA specificity since it is able to aspartylate not only its cognate tRNA(Asp) but also tRNA(Asn). Reaction proceeds in two steps: L-aspartate is first activated by ATP to form Asp-AMP and then transferred to the acceptor end of tRNA(Asp/Asn). The chain is Aspartate--tRNA(Asp/Asn) ligase from Thermobifida fusca (strain YX).